We begin with the raw amino-acid sequence, 428 residues long: S-adenosylmethionine synthase (428 aa).

His14 provides a ligand contact to ATP. Position 16 (Asp16) interacts with Mg(2+). Glu42 provides a ligand contact to K(+). Residues Glu55 and Gln98 each coordinate L-methionine. The tract at residues 98 to 108 is flexible loop; it reads QSGDINRGVER. ATP is bound by residues 165 to 167, 251 to 252, Asp260, 266 to 267, Ala283, and Lys287; these read DAK, KF, and RK. Asp260 lines the L-methionine pocket. Lys291 lines the L-methionine pocket.

Belongs to the AdoMet synthase family. In terms of assembly, homotetramer; dimer of dimers. Requires Mg(2+) as cofactor. K(+) serves as cofactor.

The protein resides in the cytoplasm. It catalyses the reaction L-methionine + ATP + H2O = S-adenosyl-L-methionine + phosphate + diphosphate. Its pathway is amino-acid biosynthesis; S-adenosyl-L-methionine biosynthesis; S-adenosyl-L-methionine from L-methionine: step 1/1. Catalyzes the formation of S-adenosylmethionine (AdoMet) from methionine and ATP. The overall synthetic reaction is composed of two sequential steps, AdoMet formation and the subsequent tripolyphosphate hydrolysis which occurs prior to release of AdoMet from the enzyme. In Parabacteroides distasonis (strain ATCC 8503 / DSM 20701 / CIP 104284 / JCM 5825 / NCTC 11152), this protein is S-adenosylmethionine synthase.